We begin with the raw amino-acid sequence, 153 residues long: Pheromone-binding protein Gp-9 (153 aa).

A signal peptide spans 1–19; that stretch reads MKTFVLHIFIFALVAFASA. Intrachain disulfides connect Cys37–Cys77, Cys73–Cys129, and Cys118–Cys138.

It belongs to the PBP/GOBP family. In terms of assembly, homodimer.

The protein localises to the secreted. Functionally, colony queen number, a major feature of social organization, is associated with worker genotype for Gp-9. Colonies are headed by either a single reproductive queen (monogyne form) or multiple queens (polygyne form). Differences in worker Gp-9 genotypes between social forms may cause differences in workers' abilities to recognize queens and regulate their numbers. The chain is Pheromone-binding protein Gp-9 from Solenopsis tridens (Fire ant).